The chain runs to 48 residues: Delta-stichotoxin-Hmg4b (48 aa).

Disulfide bonds link cysteine 3–cysteine 43, cysteine 5–cysteine 33, and cysteine 26–cysteine 44.

This sequence belongs to the sea anemone sodium channel inhibitory toxin family. Type II subfamily.

The protein localises to the secreted. The protein resides in the nematocyst. Binds specifically to voltage-gated sodium channels (Nav), thereby delaying their inactivation during signal transduction. Its toxicity is greater than that of RpII (AC P01534). The protein is Delta-stichotoxin-Hmg4b of Heteractis magnifica (Magnificent sea anemone).